The sequence spans 271 residues: Elongation factor Ts (271 aa).

The interval threonine 76–valine 79 is involved in Mg(2+) ion dislocation from EF-Tu.

It belongs to the EF-Ts family.

The protein localises to the cytoplasm. Functionally, associates with the EF-Tu.GDP complex and induces the exchange of GDP to GTP. It remains bound to the aminoacyl-tRNA.EF-Tu.GTP complex up to the GTP hydrolysis stage on the ribosome. The protein is Elongation factor Ts of Mycobacterium ulcerans (strain Agy99).